We begin with the raw amino-acid sequence, 511 residues long: 2,3-bisphosphoglycerate-independent phosphoglycerate mutase (511 aa).

Mn(2+)-binding residues include Asp12 and Ser62. The active-site Phosphoserine intermediate is the Ser62. Substrate is bound by residues His123, 152-153 (RD), Arg184, Arg190, 259-262 (RADR), and Lys333. Mn(2+) contacts are provided by Asp401, His405, Asp442, His443, and His460.

Belongs to the BPG-independent phosphoglycerate mutase family. As to quaternary structure, monomer. The cofactor is Mn(2+).

It catalyses the reaction (2R)-2-phosphoglycerate = (2R)-3-phosphoglycerate. The protein operates within carbohydrate degradation; glycolysis; pyruvate from D-glyceraldehyde 3-phosphate: step 3/5. In terms of biological role, catalyzes the interconversion of 2-phosphoglycerate and 3-phosphoglycerate. This is 2,3-bisphosphoglycerate-independent phosphoglycerate mutase from Nitratidesulfovibrio vulgaris (strain ATCC 29579 / DSM 644 / CCUG 34227 / NCIMB 8303 / VKM B-1760 / Hildenborough) (Desulfovibrio vulgaris).